We begin with the raw amino-acid sequence, 950 residues long: Coatomer subunit beta-2 (950 aa).

HEAT repeat units lie at residues 92–126 (PEMI…LSEP), 127–164 (EVLE…LPHG), 275–312 (TAVR…TSHR), 313–350 (DVMV…ARNV), and 392–429 (EVAG…TNPK).

In terms of assembly, oligomeric complex that consists of at least the alpha, beta, beta', gamma, delta, epsilon and zeta subunits.

It is found in the cytoplasm. It localises to the golgi apparatus membrane. The protein localises to the cytoplasmic vesicle. The protein resides in the COPI-coated vesicle membrane. Functionally, the coatomer is a cytosolic protein complex that binds to dilysine motifs and reversibly associates with Golgi non-clathrin-coated vesicles, which further mediate biosynthetic protein transport from the ER, via the Golgi up to the trans Golgi network. Coatomer complex is required for budding from Golgi membranes, and is essential for the retrograde Golgi-to-ER transport of dilysine-tagged proteins. The protein is Coatomer subunit beta-2 of Oryza sativa subsp. japonica (Rice).